A 701-amino-acid chain; its full sequence is MEKRGPKRRQEAAHLSCELCRERKVKCDKLDPCTNCSSAGVICVPVRRPRLPRGAHAQRLRRISPEDPEAPIQIDIAPPADAGTIADDDLKERIRRLEALVDSMRSSNHISKQLIKNFQTNKDQEAQDTIESTLNGIDEDSLLIKGPRVHPSDGGLRILGLSGSSSPETGWASIIEDREISMQLCQVYLLNVDPVIKILHRPSLEKWMLQGQRYLGLPEGHAAVESLGAAICYVAATSLTETQSWARFHTTKSSIVARARRACETTLEKSSPLLSPDVTTLQAFVLYLVARRSEDPSRAVWTLMAFAVRIAKALDLPRVTDDNFFDQQMRKRLWLAICLLDFQTSLSQPSEPLITVVEATSSFSPPRHINDSDFDPTTSHDIPDREGLTDTTFSLVSYHVQAAGRLLNFEPCVKDDGSRQQHVQHFEQRTLRLLLYCDPESTPYAWFTWHRIQCFVSGARLSAIRPLLHQHRDHPIPILDANEGTSILSLALNILEKVQLVHTDPRGERFRWFVTVPWQPLAIAISECYICQDRSLVQRAWPIVEAAFQQHEAAVSGSSKAISITLERLMCRVRGKLLPSLGTSTSITTSPTFGTTDAANALSVPHTPPSRSSIISNGDLLSNWSWTTAELSRPGEELALVTEAPVSTSPQKVDPLLLSLDSPLLIAGQEQLVEADQSWAAWEERIAIGEEERRQEKKEKH.

Positions 17-43 (CELCRERKVKCDKLDPCTNCSSAGVIC) form a DNA-binding region, zn(2)-C6 fungal-type.

The protein resides in the nucleus. Transcription factor that specifically regulates the neosartoricin B biosynthesis gene cluster. The chain is C6 finger domain transcription factor nscR from Arthroderma benhamiae (strain ATCC MYA-4681 / CBS 112371) (Trichophyton mentagrophytes).